The primary structure comprises 460 residues: VGFKAGVKDYRLTYYTPEYQTKDTDILAAFRVTPQPGVPPEEAGXAVAAESSTGTWTTVWTDGLTSLDRYKGRCYDIEPVPGEETQFIAYVAYPLDLFEEGSVTNMFTSIVGNVFGFKALRALRLEDLRIPPAYSKTFQGPPHGIQVERDKLNKYGRPLLGCTIKPKLGLSAKNYGRAVYECLRGGLDFTKDDENVNSQPFMRWRDRFCFCAEALYKAQAETGEIKGHYLNATAGTSEEMMKRAVFARELGVPIVMHDYLTGGFTSNTSLAHYCRDNGLLLHIHRAMHAVIDRQRNHGIHFRVLAKALRMSGGDHIHAGTVVGKLEGEREVTLGFVDLLRDDFIEKDRSRGIYFTQDWVSMPGVLPVASGGIHVWHMPALTEIFGDDSVLQFGGGTLGHPWGNAPGAVANRVALEACVQARNEGRDLAREGNEVIREATKWSPELAAACEVWKEIKFEFD.

Lysine 4 carries the post-translational modification N6,N6,N6-trimethyllysine. Asparagine 113 and threonine 163 together coordinate substrate. Lysine 165 acts as the Proton acceptor in catalysis. Substrate is bound at residue lysine 167. Mg(2+) is bound by residues lysine 191, aspartate 193, and glutamate 194. Residue lysine 191 is modified to N6-carboxylysine. Histidine 284 (proton acceptor) is an active-site residue. Substrate contacts are provided by arginine 285, histidine 317, and serine 369.

It belongs to the RuBisCO large chain family. Type I subfamily. Heterohexadecamer of 8 large chains and 8 small chains. It depends on Mg(2+) as a cofactor.

The protein localises to the plastid. Its subcellular location is the chloroplast. It catalyses the reaction 2 (2R)-3-phosphoglycerate + 2 H(+) = D-ribulose 1,5-bisphosphate + CO2 + H2O. The enzyme catalyses D-ribulose 1,5-bisphosphate + O2 = 2-phosphoglycolate + (2R)-3-phosphoglycerate + 2 H(+). RuBisCO catalyzes two reactions: the carboxylation of D-ribulose 1,5-bisphosphate, the primary event in carbon dioxide fixation, as well as the oxidative fragmentation of the pentose substrate in the photorespiration process. Both reactions occur simultaneously and in competition at the same active site. The chain is Ribulose bisphosphate carboxylase large chain from Cunninghamia lanceolata (China fir).